The sequence spans 521 residues: MEFFLDPSTWAGLLTLVILEVVLGIDNLIFVAILSEKLPPNQRDKARLIGLGLALVMRLALLSLISWIVTLNSPIVHNKFFSLSIRDIILLFGGFFLLFKTTMELHERLENNHHENSENKNYAGFWAVVIQIVVLDAVFSLDAIITAVGMVNQLLIMMIAVILATFLMLLASKALTNFINLHQTVVVLCLSFLLMIGFSLVTEALRFCIPKGYLYAAIGFSILIEIFNQIARHNFMKNQSRRPMRQRAAEAILRLMVGEQNKKQQIKKIEINSQKTDSIQSSKEMETFKDEERYMINGVLTLAGRSIRSIMTPRSNISWVNTEKNTDEIRMQLLDTPHSLFPVCKGELDEIIGIVRAKELLVAIEKKIDASTFSSKILPIIIPDTLDPIKLLGVLRRAQGSFVIVSNEFGVVQGLITPLDVLEAIAGEFPDADETPDIIQENNSWLVKGETDLHSLQQLLNTEELIKEDNYASLGGLLIAQKGQLPIPGEIIHIHPFYFHIVKATEYRIDLVRIIKNQDDN.

7 helical membrane passes run 13-33 (LLTLVILEVVLGIDNLIFVAI), 49-69 (IGLGLALVMRLALLSLISWIV), 80-100 (FFSLSIRDIILLFGGFFLLFK), 125-145 (FWAVVIQIVVLDAVFSLDAII), 150-170 (MVNQLLIMMIAVILATFLMLL), 185-205 (VVVLCLSFLLMIGFSLVTEAL), and 207-227 (FCIPKGYLYAAIGFSILIEIF). CBS domains lie at 311 to 370 (MTPR…KIDA) and 374 to 434 (SSKI…DADE).

The protein belongs to the UPF0053 family.

Its subcellular location is the cell membrane. The chain is UPF0053 protein BU323 from Buchnera aphidicola subsp. Acyrthosiphon pisum (strain APS) (Acyrthosiphon pisum symbiotic bacterium).